The following is a 159-amino-acid chain: Ribosomal RNA large subunit methyltransferase H (159 aa).

S-adenosyl-L-methionine is bound by residues leucine 76 and glycine 108.

The protein belongs to the RNA methyltransferase RlmH family. In terms of assembly, homodimer.

The protein localises to the cytoplasm. It carries out the reaction pseudouridine(1915) in 23S rRNA + S-adenosyl-L-methionine = N(3)-methylpseudouridine(1915) in 23S rRNA + S-adenosyl-L-homocysteine + H(+). In terms of biological role, specifically methylates the pseudouridine at position 1915 (m3Psi1915) in 23S rRNA. This Limosilactobacillus fermentum (strain NBRC 3956 / LMG 18251) (Lactobacillus fermentum) protein is Ribosomal RNA large subunit methyltransferase H.